We begin with the raw amino-acid sequence, 409 residues long: Glutamate--tRNA ligase 2 (409 aa).

The short motif at 9 to 19 (PSPTGNLHIGG) is the 'HIGH' region element. Residues 198-202 (KLSKR) carry the 'KMSKS' region motif. K201 lines the ATP pocket.

This sequence belongs to the class-I aminoacyl-tRNA synthetase family. Glutamate--tRNA ligase type 1 subfamily. As to quaternary structure, monomer.

The protein localises to the cytoplasm. The enzyme catalyses tRNA(Glu) + L-glutamate + ATP = L-glutamyl-tRNA(Glu) + AMP + diphosphate. In terms of biological role, catalyzes the attachment of glutamate to tRNA(Glu) in a two-step reaction: glutamate is first activated by ATP to form Glu-AMP and then transferred to the acceptor end of tRNA(Glu). The protein is Glutamate--tRNA ligase 2 of Neorickettsia sennetsu (strain ATCC VR-367 / Miyayama) (Ehrlichia sennetsu).